Here is a 158-residue protein sequence, read N- to C-terminus: Large ribosomal subunit protein uL13 (158 aa).

Residues 129 to 158 (PEHGHHAQKPVALDFGAMNNKNGRGNNAGR) are disordered. A compositionally biased stretch (low complexity) spans 144-158 (GAMNNKNGRGNNAGR).

It belongs to the universal ribosomal protein uL13 family. Part of the 50S ribosomal subunit.

In terms of biological role, this protein is one of the early assembly proteins of the 50S ribosomal subunit, although it is not seen to bind rRNA by itself. It is important during the early stages of 50S assembly. This chain is Large ribosomal subunit protein uL13, found in Anaplasma phagocytophilum (strain HZ).